Reading from the N-terminus, the 207-residue chain is Thymidylate kinase (207 aa).

Residue 7–14 (GCEGTGKT) participates in ATP binding.

The protein belongs to the thymidylate kinase family.

The catalysed reaction is dTMP + ATP = dTDP + ADP. In terms of biological role, phosphorylation of dTMP to form dTDP in both de novo and salvage pathways of dTTP synthesis. The chain is Thymidylate kinase from Aster yellows witches'-broom phytoplasma (strain AYWB).